Consider the following 158-residue polypeptide: Low molecular weight phosphotyrosine protein phosphatase (158 aa).

At alanine 2 the chain carries N-acetylalanine. The active-site Nucleophile is cysteine 13. The active site involves arginine 19. The active-site Proton donor is aspartate 130. Phosphotyrosine occurs at positions 132 and 133.

The protein belongs to the low molecular weight phosphotyrosine protein phosphatase family. In terms of assembly, interacts with EPHA2; dephosphorylates EPHA2. Interacts with EPHB1. Interacts with the SH3 domain of SPTAN1. There is no interaction observed for isoform 2. Phosphorylated by LCK. Phosphorylation at Tyr-132 increases its phosphatase activity.

The protein resides in the cytoplasm. The enzyme catalyses O-phospho-L-tyrosyl-[protein] + H2O = L-tyrosyl-[protein] + phosphate. It catalyses the reaction a phosphate monoester + H2O = an alcohol + phosphate. Inhibited by sulfhydryl reagents. Functionally, acts on tyrosine phosphorylated proteins, low-MW aryl phosphates and natural and synthetic acyl phosphates with differences in substrate specificity between isoform 1 and isoform 2. This Rattus norvegicus (Rat) protein is Low molecular weight phosphotyrosine protein phosphatase.